Consider the following 234-residue polypeptide: Protein spitz (234 aa).

Residues 1–28 form the signal peptide; that stretch reads MHSTMSVQHGLVALVLIGCLAHPWHVEA. Residues 29–143 lie on the Lumenal side of the membrane; the sequence is CSSRTVPKPR…RPRPMLEKAS (115 aa). The tract at residues 33 to 71 is disordered; that stretch reads TVPKPRSSISSSMSGTALPPTQAPVTSSTTMRTTTTTTP. The segment covering 56-71 has biased composition (low complexity); that stretch reads PVTSSTTMRTTTTTTP. N-linked (GlcNAc...) asparagine glycosylation occurs at asparagine 74. Residues 78-122 enclose the EGF-like domain; the sequence is PTYKCPETFDAWYCLNDAHCFAVKIADLPVYSCECAIGFMGQRCE. 3 disulfides stabilise this stretch: cysteine 82–cysteine 97, cysteine 91–cysteine 110, and cysteine 112–cysteine 121. The helical transmembrane segment at 144–164 threads the bilayer; that stretch reads IASGAMCALVFMLFVCLAFYL. Topologically, residues 165–234 are cytoplasmic; that stretch reads RFEQRAAKKA…SFAIRRSNKL (70 aa).

Interacts with Star via the lumenal domain. In terms of processing, proteolytic processing by Rhomboid occurs in the Golgi. Cleavage takes place within the transmembrane domain close to residue 144 and the active growth factor is released. Post-translationally, N-glycosylated and O-glycosylated. In terms of tissue distribution, expressed throughout the embryo.

It localises to the cell membrane. Its subcellular location is the endoplasmic reticulum membrane. The protein resides in the golgi apparatus membrane. Its function is as follows. Ligand for the EGF receptor (Gurken). Involved in a number of unrelated developmental choices, for example, dorsal-ventral axis formation, glial migration, sensory organ determination, and muscle development. It is required for photoreceptor determination. The polypeptide is Protein spitz (spi) (Drosophila melanogaster (Fruit fly)).